A 978-amino-acid chain; its full sequence is LRR receptor-like serine/threonine-protein kinase ER1 (978 aa).

The N-terminal stretch at 1-24 (MTPAPAAASYRALVALLLVAVAVA) is a signal peptide. Residues 25 to 577 (DDGSTLLEIK…GHQQKPLISK (553 aa)) are Extracellular-facing. N-linked (GlcNAc...) asparagine glycosylation is found at asparagine 62 and asparagine 71. LRR repeat units lie at residues 66-87 (AVAA…AVGR), 88-112 (LKGI…IGDC), 114-136 (SLKT…VSKL), 137-159 (KHIE…TLSQ), 160-184 (LPNL…IYWN), 186-208 (VLQY…ICQL), 209-232 (TGLW…IGNC), 233-257 (TSFQ…GFLQ), 259-278 (ATLS…VIGL), 279-302 (MQAL…ILGN), 304-327 (TYTE…LGNM), 328-350 (STLH…EFGK), 352-375 (TGLF…ISSC), 377-399 (NLNS…LHKL), 400-423 (ESMT…LSRI), 424-447 (NNLD…IGSL), 449-470 (HLLR…EIGN), 471-494 (LRSI…ELGM), 496-518 (QNLM…LMNC), and 519-543 (FSLN…NFSR). 2 N-linked (GlcNAc...) asparagine glycosylation sites follow: asparagine 218 and asparagine 231. Residues asparagine 302 and asparagine 326 are each glycosylated (N-linked (GlcNAc...) asparagine). Residues asparagine 371, asparagine 389, and asparagine 406 are each glycosylated (N-linked (GlcNAc...) asparagine). An N-linked (GlcNAc...) asparagine glycan is attached at asparagine 454. Residues asparagine 507, asparagine 525, and asparagine 540 are each glycosylated (N-linked (GlcNAc...) asparagine). The helical transmembrane segment at 578–598 (AAILGIAVGGLVILLMILVAV) threads the bilayer. Over 599-978 (CRPHSPPVFK…FGEVISQNTE (380 aa)) the chain is Cytoplasmic. The Protein kinase domain maps to 645–916 (LSEKYIIGYG…EVVRVLDCLV (272 aa)). ATP is bound by residues 651 to 659 (IGYGASSTV) and lysine 673. Residue aspartate 771 is the Proton acceptor of the active site.

The protein belongs to the protein kinase superfamily. Ser/Thr protein kinase family.

The protein resides in the cell membrane. The enzyme catalyses L-seryl-[protein] + ATP = O-phospho-L-seryl-[protein] + ADP + H(+). It carries out the reaction L-threonyl-[protein] + ATP = O-phospho-L-threonyl-[protein] + ADP + H(+). In terms of biological role, receptor kinase involved in the regulation of thermotolerance. Functions as a positive regulator of heat tolerance. May be involved in the regulation of cell proliferation and cell growth. The sequence is that of LRR receptor-like serine/threonine-protein kinase ER1 from Oryza sativa subsp. japonica (Rice).